Here is a 213-residue protein sequence, read N- to C-terminus: Ribosomal RNA small subunit methyltransferase G (213 aa).

Residues glycine 77, methionine 82, 104-106, and arginine 145 each bind S-adenosyl-L-methionine; that span reads EKS.

Belongs to the methyltransferase superfamily. RNA methyltransferase RsmG family.

It localises to the cytoplasm. The enzyme catalyses guanosine(527) in 16S rRNA + S-adenosyl-L-methionine = N(7)-methylguanosine(527) in 16S rRNA + S-adenosyl-L-homocysteine. Specifically methylates the N7 position of guanine in position 527 of 16S rRNA. The protein is Ribosomal RNA small subunit methyltransferase G of Pelagibacter ubique (strain HTCC1062).